Consider the following 362-residue polypeptide: Peptide chain release factor 1 (362 aa).

The residue at position 237 (Q237) is an N5-methylglutamine.

This sequence belongs to the prokaryotic/mitochondrial release factor family. Post-translationally, methylated by PrmC. Methylation increases the termination efficiency of RF1.

Its subcellular location is the cytoplasm. Peptide chain release factor 1 directs the termination of translation in response to the peptide chain termination codons UAG and UAA. The protein is Peptide chain release factor 1 of Aeromonas salmonicida (strain A449).